The following is a 242-amino-acid chain: Probable transcriptional regulatory protein Csac_0964 (242 aa).

The segment at 1-20 is disordered; it reads MSGHSKWANIRHKKEKTDAQ.

This sequence belongs to the TACO1 family.

It localises to the cytoplasm. This chain is Probable transcriptional regulatory protein Csac_0964, found in Caldicellulosiruptor saccharolyticus (strain ATCC 43494 / DSM 8903 / Tp8T 6331).